Reading from the N-terminus, the 240-residue chain is Ubiquinone biosynthesis O-methyltransferase (240 aa).

S-adenosyl-L-methionine contacts are provided by Arg-44, Gly-64, Asp-85, and Met-129.

The protein belongs to the methyltransferase superfamily. UbiG/COQ3 family.

The enzyme catalyses a 3-demethylubiquinol + S-adenosyl-L-methionine = a ubiquinol + S-adenosyl-L-homocysteine + H(+). It carries out the reaction a 3-(all-trans-polyprenyl)benzene-1,2-diol + S-adenosyl-L-methionine = a 2-methoxy-6-(all-trans-polyprenyl)phenol + S-adenosyl-L-homocysteine + H(+). It functions in the pathway cofactor biosynthesis; ubiquinone biosynthesis. In terms of biological role, O-methyltransferase that catalyzes the 2 O-methylation steps in the ubiquinone biosynthetic pathway. The chain is Ubiquinone biosynthesis O-methyltransferase from Escherichia fergusonii (strain ATCC 35469 / DSM 13698 / CCUG 18766 / IAM 14443 / JCM 21226 / LMG 7866 / NBRC 102419 / NCTC 12128 / CDC 0568-73).